Consider the following 254-residue polypeptide: MDLKIGKIETELNNILKKEGALYFVLIDPDEKNYAEVAEKVKDYADAIIIGGSIGITNLDEVTKNIKKITNLPVILFPGNVDGVTKEADAVLFMSLMNSKNTYWNMTAPTLGALTIKKYGLEAIPMAYLGIEPISKTAVGFVGEVNEIPQKKPEIASIYCLSASYFGMRWAYLEAGSGAEFPVSNEMILISKKLSGINLIVGGGIRSPDVAYEKVISGADVIVTGTLTEKNPDAVKEMKEAIKRAGKDKLKNKN.

Residues Asp-28 and Ser-53 each coordinate Mg(2+). Sn-glycerol 1-phosphate contacts are provided by residues Tyr-172–Gly-178, Gly-203–Gly-204, and Gly-225–Thr-226.

This sequence belongs to the GGGP/HepGP synthase family. Group II subfamily. It depends on Mg(2+) as a cofactor.

Its subcellular location is the cytoplasm. The enzyme catalyses sn-glycerol 1-phosphate + (2E,6E,10E)-geranylgeranyl diphosphate = sn-3-O-(geranylgeranyl)glycerol 1-phosphate + diphosphate. It participates in membrane lipid metabolism; glycerophospholipid metabolism. Functionally, prenyltransferase that catalyzes the transfer of the geranylgeranyl moiety of geranylgeranyl diphosphate (GGPP) to the C3 hydroxyl of sn-glycerol-1-phosphate (G1P). This reaction is the first ether-bond-formation step in the biosynthesis of archaeal membrane lipids. In Methanococcus vannielii (strain ATCC 35089 / DSM 1224 / JCM 13029 / OCM 148 / SB), this protein is Geranylgeranylglyceryl phosphate synthase.